Here is a 449-residue protein sequence, read N- to C-terminus: Methionine aminopeptidase 2-2 (449 aa).

Residues 1–91 form a disordered region; sequence MAAQAAPELA…PRIPLTTLFP (91 aa). Residues 15-28 are compositionally biased toward polar residues; that stretch reads NKNTGSAEASTVPA. Over residues 34 to 50 the composition is skewed to acidic residues; that stretch reads DDAENEGDSDDDRDDEQ. Residues 61-75 are compositionally biased toward basic residues; it reads KKKKKKRPKKKKKTA. Residue H199 participates in substrate binding. A divalent metal cation-binding residues include D219, D230, and H299. H307 is a substrate binding site. Residues E335 and E430 each coordinate a divalent metal cation.

Belongs to the peptidase M24A family. Methionine aminopeptidase eukaryotic type 2 subfamily. Co(2+) serves as cofactor. It depends on Zn(2+) as a cofactor. The cofactor is Mn(2+). Fe(2+) is required as a cofactor.

Its subcellular location is the cytoplasm. The catalysed reaction is Release of N-terminal amino acids, preferentially methionine, from peptides and arylamides.. Cotranslationally removes the N-terminal methionine from nascent proteins. The N-terminal methionine is often cleaved when the second residue in the primary sequence is small and uncharged (Met-Ala-, Cys, Gly, Pro, Ser, Thr, or Val). The sequence is that of Methionine aminopeptidase 2-2 from Arthroderma gypseum (strain ATCC MYA-4604 / CBS 118893) (Microsporum gypseum).